Consider the following 656-residue polypeptide: DNA ligase (656 aa).

NAD(+) contacts are provided by residues 32-36, 81-82, and Glu112; these read DEEYD and SM. Lys114 functions as the N6-AMP-lysine intermediate in the catalytic mechanism. 4 residues coordinate NAD(+): Arg135, Glu169, Lys284, and Lys308. Residues Cys402, Cys405, Cys418, and Cys423 each coordinate Zn(2+). Residues 577–656 form the BRCT domain; the sequence is VQKTPFTGKT…DMWKMLKEGK (80 aa).

It belongs to the NAD-dependent DNA ligase family. LigA subfamily. Requires Mg(2+) as cofactor. Mn(2+) is required as a cofactor.

It carries out the reaction NAD(+) + (deoxyribonucleotide)n-3'-hydroxyl + 5'-phospho-(deoxyribonucleotide)m = (deoxyribonucleotide)n+m + AMP + beta-nicotinamide D-nucleotide.. Its function is as follows. DNA ligase that catalyzes the formation of phosphodiester linkages between 5'-phosphoryl and 3'-hydroxyl groups in double-stranded DNA using NAD as a coenzyme and as the energy source for the reaction. It is essential for DNA replication and repair of damaged DNA. The polypeptide is DNA ligase (Nautilia profundicola (strain ATCC BAA-1463 / DSM 18972 / AmH)).